Reading from the N-terminus, the 242-residue chain is 3-deoxy-manno-octulosonate cytidylyltransferase (242 aa).

It belongs to the KdsB family.

Its subcellular location is the cytoplasm. It catalyses the reaction 3-deoxy-alpha-D-manno-oct-2-ulosonate + CTP = CMP-3-deoxy-beta-D-manno-octulosonate + diphosphate. Its pathway is nucleotide-sugar biosynthesis; CMP-3-deoxy-D-manno-octulosonate biosynthesis; CMP-3-deoxy-D-manno-octulosonate from 3-deoxy-D-manno-octulosonate and CTP: step 1/1. It functions in the pathway bacterial outer membrane biogenesis; lipopolysaccharide biosynthesis. Its function is as follows. Activates KDO (a required 8-carbon sugar) for incorporation into bacterial lipopolysaccharide in Gram-negative bacteria. This Anaeromyxobacter sp. (strain K) protein is 3-deoxy-manno-octulosonate cytidylyltransferase.